Consider the following 117-residue polypeptide: Hydrogenase maturation factor HypA (117 aa).

Ni(2+) is bound at residue H2. Residues C73, C76, C90, and C93 each coordinate Zn(2+).

This sequence belongs to the HypA/HybF family.

Its function is as follows. Involved in the maturation of [NiFe] hydrogenases. Required for nickel insertion into the metal center of the hydrogenase. In Pectobacterium atrosepticum (strain SCRI 1043 / ATCC BAA-672) (Erwinia carotovora subsp. atroseptica), this protein is Hydrogenase maturation factor HypA.